Here is a 1153-residue protein sequence, read N- to C-terminus: Myosin-3 (1153 aa).

Residues 104–153 form the Myosin N-terminal SH3-like domain; it reads KKVLQFWVQLPNGNWELGKIMSTSGEESVIVVTEGKVLKVKSETLVPANP. The Myosin motor domain maps to 157 to 829; sequence DGVDDLMQLS…QIGVLEDTRN (673 aa). Residues 248–255 and 296–304 contribute to the ATP site; these read GESGAGKT and NDNSSRFGK. Actin-binding stretches follow at residues 581–615 and 709–731; these read LFEK…KQHL and LFQL…KPNN. IQ domains lie at 831–860, 854–883, and 903–932; these read TLHG…GITI, LKTG…RHRA, and TVDA…LSSG. Residues 948-996 adopt a coiled-coil conformation; that stretch reads YLSDLQRRVLRTEAALREKEEENDILRQRVQQYDNRWSEYETKMKSMEE. A disordered region spans residues 1020-1050; sequence DSARNSDASVNASDATDLDSGGSHYQMGHGR. Polar residues predominate over residues 1024-1033; that stretch reads NSDASVNASD.

This sequence belongs to the TRAFAC class myosin-kinesin ATPase superfamily. Myosin family. Plant myosin class VIII subfamily. As to quaternary structure, homodimer.

In terms of biological role, myosin heavy chain that is required for the cell cycle-regulated transport of various organelles and proteins for their segregation. Functions by binding with its tail domain to receptor proteins on organelles and exerting force with its N-terminal motor domain against actin filaments, thereby transporting its cargo along polarized actin cables. The sequence is that of Myosin-3 (VIII-A) from Arabidopsis thaliana (Mouse-ear cress).